Here is a 438-residue protein sequence, read N- to C-terminus: 23S rRNA (uracil(1939)-C(5))-methyltransferase RlmD (438 aa).

Positions 8–68 (KQKTNNVQTI…RQYGHATAKK (61 aa)) constitute a TRAM domain. Cys81, Cys87, Cys90, and Cys168 together coordinate [4Fe-4S] cluster. 6 residues coordinate S-adenosyl-L-methionine: Gln271, Phe300, Asn305, Glu321, Asp348, and Asp369. Cys395 functions as the Nucleophile in the catalytic mechanism.

This sequence belongs to the class I-like SAM-binding methyltransferase superfamily. RNA M5U methyltransferase family. RlmD subfamily.

The catalysed reaction is uridine(1939) in 23S rRNA + S-adenosyl-L-methionine = 5-methyluridine(1939) in 23S rRNA + S-adenosyl-L-homocysteine + H(+). Its function is as follows. Catalyzes the formation of 5-methyl-uridine at position 1939 (m5U1939) in 23S rRNA. The chain is 23S rRNA (uracil(1939)-C(5))-methyltransferase RlmD from Haemophilus influenzae (strain 86-028NP).